The primary structure comprises 31 residues: Cyclotide cter-R (31 aa).

A cross-link (cyclopeptide (Gly-Asn)) is located at residues 1–31 (GIPCGESCVFIPCTVTALLGCSCKDKVCYKN). 3 cysteine pairs are disulfide-bonded: Cys4/Cys21, Cys8/Cys23, and Cys13/Cys28.

Post-translationally, this is a cyclic peptide.

It localises to the secreted. Probably participates in a plant defense mechanism. The chain is Cyclotide cter-R from Clitoria ternatea (Butterfly pea).